We begin with the raw amino-acid sequence, 77 residues long: Large ribosomal subunit protein bL28 (77 aa).

The interval 1-20 (MSRVCQVTGKGPVTGNNISH) is disordered.

The protein belongs to the bacterial ribosomal protein bL28 family.

The sequence is that of Large ribosomal subunit protein bL28 from Pseudomonas fluorescens (strain SBW25).